The chain runs to 234 residues: Rhodanese-like domain-containing protein 9, chloroplastic (234 aa).

The N-terminal 47 residues, 1–47, are a transit peptide targeting the chloroplast; sequence MAGIISPSPTALYFTSNVGGRRLKAVSWAGKSVSGNVIRRRSLRIAA. The 124-residue stretch at 62–185 folds into the Rhodanese domain; that stretch reads AEEGYSVVDV…VKPGTFESVG (124 aa). The active-site Cysteine persulfide intermediate is C145. Residues 204-222 form a helical membrane-spanning segment; that stretch reads ISAVLGTVLVCAYLFIQFF.

It is found in the plastid. It localises to the chloroplast. The protein resides in the membrane. This chain is Rhodanese-like domain-containing protein 9, chloroplastic (STR9), found in Arabidopsis thaliana (Mouse-ear cress).